The sequence spans 1132 residues: Protein sel-1 homolog 3 (1132 aa).

A disordered region spans residues 1–24 (MQRRGAGLGWPRQQQQQPPPLAVG). Residues N201, N382, and N527 are each glycosylated (N-linked (GlcNAc...) asparagine). Sel1-like repeat units lie at residues 575–609 (YLAV…RLSS), 611–647 (NLGY…DQHT), 694–730 (RLAQ…PALI), 732–767 (DYAI…QAVN), 768–800 (GLGW…DASY), 801–839 (NLGV…EGTL), and 840–877 (WCSL…LGHV). A Phosphoserine modification is found at S608. An N-linked (GlcNAc...) asparagine glycan is attached at N937. Residues 952 to 988 (KMGDLYYYGHQNQSQDLELSVQMYAQAALDGDSQGFF) form a Sel1-like 8 repeat. A helical membrane pass occupies residues 1057–1077 (ILHSALIYFLGTFLLSILIAW). A disordered region spans residues 1087–1132 (ASDPPPRPSQASPDTATSTASPAVTPAADASDQDQPTVTNNPEPRG). Residues 1097-1116 (ASPDTATSTASPAVTPAADA) show a composition bias toward low complexity. Residues 1119–1132 (QDQPTVTNNPEPRG) are compositionally biased toward polar residues.

The protein localises to the membrane. This is Protein sel-1 homolog 3 (SEL1L3) from Homo sapiens (Human).